Here is a 283-residue protein sequence, read N- to C-terminus: Phosphatidylserine decarboxylase proenzyme (283 aa).

Catalysis depends on charge relay system; for autoendoproteolytic cleavage activity residues D96, H152, and S250. The active-site Schiff-base intermediate with substrate; via pyruvic acid; for decarboxylase activity is the S250. Pyruvic acid (Ser); by autocatalysis is present on S250.

Belongs to the phosphatidylserine decarboxylase family. PSD-B subfamily. Prokaryotic type I sub-subfamily. In terms of assembly, heterodimer of a large membrane-associated beta subunit and a small pyruvoyl-containing alpha subunit. Pyruvate is required as a cofactor. Post-translationally, is synthesized initially as an inactive proenzyme. Formation of the active enzyme involves a self-maturation process in which the active site pyruvoyl group is generated from an internal serine residue via an autocatalytic post-translational modification. Two non-identical subunits are generated from the proenzyme in this reaction, and the pyruvate is formed at the N-terminus of the alpha chain, which is derived from the carboxyl end of the proenzyme. The autoendoproteolytic cleavage occurs by a canonical serine protease mechanism, in which the side chain hydroxyl group of the serine supplies its oxygen atom to form the C-terminus of the beta chain, while the remainder of the serine residue undergoes an oxidative deamination to produce ammonia and the pyruvoyl prosthetic group on the alpha chain. During this reaction, the Ser that is part of the protease active site of the proenzyme becomes the pyruvoyl prosthetic group, which constitutes an essential element of the active site of the mature decarboxylase.

Its subcellular location is the cell membrane. The enzyme catalyses a 1,2-diacyl-sn-glycero-3-phospho-L-serine + H(+) = a 1,2-diacyl-sn-glycero-3-phosphoethanolamine + CO2. It participates in phospholipid metabolism; phosphatidylethanolamine biosynthesis; phosphatidylethanolamine from CDP-diacylglycerol: step 2/2. Catalyzes the formation of phosphatidylethanolamine (PtdEtn) from phosphatidylserine (PtdSer). The chain is Phosphatidylserine decarboxylase proenzyme from Acinetobacter baumannii (strain ATCC 17978 / DSM 105126 / CIP 53.77 / LMG 1025 / NCDC KC755 / 5377).